Reading from the N-terminus, the 122-residue chain is Small ribosomal subunit protein uS13 (122 aa).

The interval 95–122 (GLPVRGQKTKTNARTRKGPKRTVANKKK) is disordered.

This sequence belongs to the universal ribosomal protein uS13 family. Part of the 30S ribosomal subunit. Forms a loose heterodimer with protein S19. Forms two bridges to the 50S subunit in the 70S ribosome.

Its function is as follows. Located at the top of the head of the 30S subunit, it contacts several helices of the 16S rRNA. In the 70S ribosome it contacts the 23S rRNA (bridge B1a) and protein L5 of the 50S subunit (bridge B1b), connecting the 2 subunits; these bridges are implicated in subunit movement. Contacts the tRNAs in the A and P-sites. In Lachnoclostridium phytofermentans (strain ATCC 700394 / DSM 18823 / ISDg) (Clostridium phytofermentans), this protein is Small ribosomal subunit protein uS13.